The sequence spans 481 residues: Inosine-5'-monophosphate dehydrogenase (481 aa).

CBS domains lie at 92–148 (VIND…SKKV) and 152–209 (MTKM…PEAN). NAD(+) is bound by residues D244 and 293–295 (GIG). K(+)-binding residues include G295 and G297. S298 contributes to the IMP binding site. Residue C300 coordinates K(+). Residue C300 is the Thioimidate intermediate of the active site. IMP is bound by residues 333-335 (DGG), 356-357 (GS), and 380-384 (YRGMG). The Proton acceptor role is filled by R396. E410 provides a ligand contact to IMP. Residues E464, S465, and H466 each contribute to the K(+) site.

The protein belongs to the IMPDH/GMPR family. In terms of assembly, homotetramer. Requires K(+) as cofactor.

It catalyses the reaction IMP + NAD(+) + H2O = XMP + NADH + H(+). The protein operates within purine metabolism; XMP biosynthesis via de novo pathway; XMP from IMP: step 1/1. Mycophenolic acid (MPA) is a non-competitive inhibitor that prevents formation of the closed enzyme conformation by binding to the same site as the amobile flap. In contrast, mizoribine monophosphate (MZP) is a competitive inhibitor that induces the closed conformation. MPA is a potent inhibitor of mammalian IMPDHs but a poor inhibitor of the bacterial enzymes. MZP is a more potent inhibitor of bacterial IMPDH. In terms of biological role, catalyzes the conversion of inosine 5'-phosphate (IMP) to xanthosine 5'-phosphate (XMP), the first committed and rate-limiting step in the de novo synthesis of guanine nucleotides, and therefore plays an important role in the regulation of cell growth. This Helicobacter pylori (strain J99 / ATCC 700824) (Campylobacter pylori J99) protein is Inosine-5'-monophosphate dehydrogenase.